The following is a 246-amino-acid chain: UDP-N-acetyl-D-mannosaminuronic acid transferase (246 aa).

It belongs to the glycosyltransferase 26 family.

The catalysed reaction is UDP-N-acetyl-alpha-D-mannosaminouronate + N-acetyl-alpha-D-glucosaminyl-di-trans,octa-cis-undecaprenyl diphosphate = beta-D-ManNAcA-(1-&gt;4)-alpha-D-GlcNAc-di-trans,octa-cis-undecaprenyl diphosphate + UDP + H(+). It functions in the pathway bacterial outer membrane biogenesis; enterobacterial common antigen biosynthesis. Catalyzes the synthesis of Und-PP-GlcNAc-ManNAcA (Lipid II), the second lipid-linked intermediate involved in enterobacterial common antigen (ECA) synthesis. The polypeptide is UDP-N-acetyl-D-mannosaminuronic acid transferase (Escherichia coli O127:H6 (strain E2348/69 / EPEC)).